We begin with the raw amino-acid sequence, 186 residues long: MAALDAIREALPEPARDIKLNLQAVLQPGPLTPAQRWGVAVATAAAARNERLLAAILADARAEVEPAVVEDALAAAAVMAMNNVYYRFRHMVGKPSYSEKPARLRMNRLVKPAASKLDFELFALAVSAVNGCETCVRSHEQVVVGGGVSEDQVHDAVRIAAVVHAAAVALELAGHAAAPSAAAAAG.

Cysteine 132 functions as the Proton donor in the catalytic mechanism. Residues cysteine 132 and cysteine 135 are joined by a disulfide bond. Cysteine 135 functions as the Cysteine sulfenic acid (-SOH) intermediate in the catalytic mechanism.

This sequence belongs to the AhpD family.

It carries out the reaction N(6)-[(R)-dihydrolipoyl]-L-lysyl-[lipoyl-carrier protein] + a hydroperoxide = N(6)-[(R)-lipoyl]-L-lysyl-[lipoyl-carrier protein] + an alcohol + H2O. Functionally, antioxidant protein with alkyl hydroperoxidase activity. Required for the reduction of the AhpC active site cysteine residues and for the regeneration of the AhpC enzyme activity. The chain is Alkyl hydroperoxide reductase AhpD from Anaeromyxobacter dehalogenans (strain 2CP-C).